Here is a 226-residue protein sequence, read N- to C-terminus: Lipoprotein-releasing system ATP-binding protein LolD (226 aa).

Positions 5-225 (FALSNISKFF…EINSCMLSSV (221 aa)) constitute an ABC transporter domain. 40 to 47 (GRSGSGKS) contacts ATP.

The protein belongs to the ABC transporter superfamily. Lipoprotein translocase (TC 3.A.1.125) family. In terms of assembly, the complex is composed of two ATP-binding proteins (LolD) and two transmembrane proteins (LolC and LolE).

The protein resides in the cell inner membrane. In terms of biological role, part of the ABC transporter complex LolCDE involved in the translocation of mature outer membrane-directed lipoproteins, from the inner membrane to the periplasmic chaperone, LolA. Responsible for the formation of the LolA-lipoprotein complex in an ATP-dependent manner. The protein is Lipoprotein-releasing system ATP-binding protein LolD of Ehrlichia canis (strain Jake).